The chain runs to 359 residues: Nicotinate-nucleotide--dimethylbenzimidazole phosphoribosyltransferase (359 aa).

Residue Glu-318 is the Proton acceptor of the active site.

This sequence belongs to the CobT family. Homodimer.

It catalyses the reaction 5,6-dimethylbenzimidazole + nicotinate beta-D-ribonucleotide = alpha-ribazole 5'-phosphate + nicotinate + H(+). It functions in the pathway nucleoside biosynthesis; alpha-ribazole biosynthesis; alpha-ribazole from 5,6-dimethylbenzimidazole: step 1/2. Functionally, catalyzes the synthesis of alpha-ribazole-5'-phosphate from nicotinate mononucleotide (NAMN) and 5,6-dimethylbenzimidazole (DMB). In Escherichia coli (strain SMS-3-5 / SECEC), this protein is Nicotinate-nucleotide--dimethylbenzimidazole phosphoribosyltransferase.